The following is a 713-amino-acid chain: Acetyl-coenzyme A synthetase 1 (713 aa).

Residues 1–39 (MSPSAVQSSKLEEQSSEIDKLKAKMSQSAATAQQKKEHE) form a disordered region. Positions 10–22 (KLEEQSSEIDKLK) are enriched in basic and acidic residues. Residues 248–251 (RGGK) and threonine 367 contribute to the CoA site. ATP is bound by residues 443–445 (GEP), 467–472 (DTYWQT), aspartate 559, and arginine 574. Positions 552–600 (PGYYFTGDGAAKDKDGYIWILGRVDDVVNVSGHRLSTAEIEAAIIEDPI) match the FACS motif. CoA is bound at residue serine 582. Arginine 585 provides a ligand contact to ATP. Arginine 650 lines the CoA pocket. The Microbody targeting signal motif lies at 711 to 713 (VKL).

It belongs to the ATP-dependent AMP-binding enzyme family.

The protein localises to the microsome. The protein resides in the cytoplasm. It localises to the mitochondrion. It is found in the nucleus. It catalyses the reaction acetate + ATP + CoA = acetyl-CoA + AMP + diphosphate. Functionally, catalyzes the production of acetyl-CoA. Provides the acetyl-CoA source for histone acetylation in the nucleus. 'Aerobic' isozyme of acetyl-coenzyme A synthetase, which supports growth on nonfermentable carbon sources such as glycerol and ethanol. May be required for assimilation of ethanol and acetate. The sequence is that of Acetyl-coenzyme A synthetase 1 (ACS1) from Saccharomyces cerevisiae (strain ATCC 204508 / S288c) (Baker's yeast).